The primary structure comprises 61 residues: Photosystem II reaction center protein K (61 aa).

Residues 1-24 (MLNIFSLICICLNSALYSSNFFFA) constitute a propeptide that is removed on maturation. Residues 40–60 (MPVIPLFFFLLAFVWQAAVSF) traverse the membrane as a helical segment.

It belongs to the PsbK family. As to quaternary structure, PSII is composed of 1 copy each of membrane proteins PsbA, PsbB, PsbC, PsbD, PsbE, PsbF, PsbH, PsbI, PsbJ, PsbK, PsbL, PsbM, PsbT, PsbX, PsbY, PsbZ, Psb30/Ycf12, at least 3 peripheral proteins of the oxygen-evolving complex and a large number of cofactors. It forms dimeric complexes.

The protein resides in the plastid. It localises to the chloroplast thylakoid membrane. One of the components of the core complex of photosystem II (PSII). PSII is a light-driven water:plastoquinone oxidoreductase that uses light energy to abstract electrons from H(2)O, generating O(2) and a proton gradient subsequently used for ATP formation. It consists of a core antenna complex that captures photons, and an electron transfer chain that converts photonic excitation into a charge separation. This chain is Photosystem II reaction center protein K, found in Vitis vinifera (Grape).